A 177-amino-acid chain; its full sequence is CDP-diacylglycerol--serine O-phosphatidyltransferase (177 aa).

A run of 5 helical transmembrane segments spans residues 4–24 (IPCM…HSLL), 28–48 (IHSA…DGMA), 77–97 (MLAY…CALT), 116–136 (LPTF…ILSF), and 140–160 (PILL…KIKF).

Belongs to the CDP-alcohol phosphatidyltransferase class-I family.

The protein localises to the cell membrane. It carries out the reaction a CDP-1,2-diacyl-sn-glycerol + L-serine = a 1,2-diacyl-sn-glycero-3-phospho-L-serine + CMP + H(+). The protein is CDP-diacylglycerol--serine O-phosphatidyltransferase (pssA) of Bacillus subtilis (strain 168).